The following is a 494-amino-acid chain: Xylan glycosyltransferase MUCI21 (494 aa).

Topologically, residues M1–K40 are cytoplasmic. Residues L41–L61 traverse the membrane as a helical; Signal-anchor for type II membrane protein segment. The Lumenal segment spans residues C62–R494. A glycan (N-linked (GlcNAc...) asparagine) is linked at N375.

This sequence belongs to the glycosyltransferase 61 family.

The protein localises to the golgi apparatus membrane. Glycosyletransferase required for the proper composition and structural properties of released seed coat mucilage. Required for the production of highly branched xylan polymers in seed coat mucilage. Facilitates the addition of xylose residues directly to the xylan backbone. Xylan with xylose side chains seems to be necessary for pectin attachment to the seed surface. Essential for xylan synthesis in seed coat epidermal (SCE) cells. This is Xylan glycosyltransferase MUCI21 from Arabidopsis thaliana (Mouse-ear cress).